Reading from the N-terminus, the 144-residue chain is Transcriptional regulator SlyA (144 aa).

In terms of domain architecture, HTH marR-type spans 2–135 (ESPLGSDLAR…LITLIAKLEH (134 aa)). A DNA-binding region (H-T-H motif) is located at residues 49–72 (QIQLAKAIGIEQPSLVRTLDQLEE).

It belongs to the SlyA family. As to quaternary structure, homodimer.

Functionally, transcription regulator that can specifically activate or repress expression of target genes. The polypeptide is Transcriptional regulator SlyA (Escherichia coli (strain 55989 / EAEC)).